The chain runs to 637 residues: Biosynthetic arginine decarboxylase (637 aa).

Residue Lys101 is modified to N6-(pyridoxal phosphate)lysine. Residue 286 to 296 (FDVGGGLAVDY) participates in substrate binding.

The protein belongs to the Orn/Lys/Arg decarboxylase class-II family. SpeA subfamily. Requires Mg(2+) as cofactor. Pyridoxal 5'-phosphate serves as cofactor.

The catalysed reaction is L-arginine + H(+) = agmatine + CO2. It functions in the pathway amine and polyamine biosynthesis; agmatine biosynthesis; agmatine from L-arginine: step 1/1. Catalyzes the biosynthesis of agmatine from arginine. The sequence is that of Biosynthetic arginine decarboxylase from Shewanella sp. (strain MR-7).